A 598-amino-acid polypeptide reads, in one-letter code: Elongation factor 4 (598 aa).

Residues 2-184 enclose the tr-type G domain; it reads KNIRNFSIIA…EIVRKIPAPE (183 aa). GTP is bound by residues 14-19 and 131-134; these read DHGKST and NKID.

This sequence belongs to the TRAFAC class translation factor GTPase superfamily. Classic translation factor GTPase family. LepA subfamily.

The protein localises to the cell inner membrane. It catalyses the reaction GTP + H2O = GDP + phosphate + H(+). In terms of biological role, required for accurate and efficient protein synthesis under certain stress conditions. May act as a fidelity factor of the translation reaction, by catalyzing a one-codon backward translocation of tRNAs on improperly translocated ribosomes. Back-translocation proceeds from a post-translocation (POST) complex to a pre-translocation (PRE) complex, thus giving elongation factor G a second chance to translocate the tRNAs correctly. Binds to ribosomes in a GTP-dependent manner. The sequence is that of Elongation factor 4 from Histophilus somni (strain 2336) (Haemophilus somnus).